The chain runs to 391 residues: Histidinol-phosphate aminotransferase (391 aa).

K248 is modified (N6-(pyridoxal phosphate)lysine).

The protein belongs to the class-II pyridoxal-phosphate-dependent aminotransferase family. Histidinol-phosphate aminotransferase subfamily. As to quaternary structure, homodimer. Requires pyridoxal 5'-phosphate as cofactor.

The enzyme catalyses L-histidinol phosphate + 2-oxoglutarate = 3-(imidazol-4-yl)-2-oxopropyl phosphate + L-glutamate. The protein operates within amino-acid biosynthesis; L-histidine biosynthesis; L-histidine from 5-phospho-alpha-D-ribose 1-diphosphate: step 7/9. The protein is Histidinol-phosphate aminotransferase of Shewanella oneidensis (strain ATCC 700550 / JCM 31522 / CIP 106686 / LMG 19005 / NCIMB 14063 / MR-1).